The primary structure comprises 614 residues: DBH-like monooxygenase protein 1 homolog (614 aa).

The N-terminal stretch at 1 to 22 is a signal peptide; the sequence is MSENKLFCAIVFLTSLFCSTCS. Residues 23-593 lie on the Lumenal side of the membrane; the sequence is QGTRFVHSAA…CRKDSAIQCE (571 aa). The DOMON domain maps to 37–150; that stretch reads RRYNIKWGFD…STVRVIWAFH (114 aa). N-linked (GlcNAc...) asparagine glycosylation is present at N116. Y205 is a catalytic residue. Cystine bridges form between C207-C259 and C244-C271. Cu cation is bound by residues H237 and H238. N249 carries N-linked (GlcNAc...) asparagine glycosylation. Cu cation is bound by residues H309, H391, and H393. Intrachain disulfides connect C366/C482, C370/C552, and C445/C467. Residue H391 is part of the active site. N454 carries N-linked (GlcNAc...) asparagine glycosylation. M466 contacts Cu cation. Residue N519 is glycosylated (N-linked (GlcNAc...) asparagine). Residues 594–612 form a helical membrane-spanning segment; it reads HSLALLLTACLLLILQTCL.

It belongs to the copper type II ascorbate-dependent monooxygenase family. Cu(2+) is required as a cofactor.

It is found in the endoplasmic reticulum membrane. This chain is DBH-like monooxygenase protein 1 homolog (moxd1), found in Danio rerio (Zebrafish).